Consider the following 1261-residue polypeptide: AT-rich interactive domain-containing protein 4A (1261 aa).

Residues 4–121 (ADEPAYLTVG…RHFAESETLD (118 aa)) form a DNA-binding region. Disordered stretches follow at residues 142-169 (RGRR…DKRR), 273-310 (ESSS…LDPE), and 435-470 (APEM…PRGR). Acidic residues-rich tracts occupy residues 151 to 165 (TEDE…EEDE) and 276 to 289 (SSDD…EHEE). The segment covering 290-299 (EKEKEAKKEE) has biased composition (basic and acidic residues). The span at 300–310 (EELPEEELDPE) shows a compositional bias: acidic residues. The region spanning 309-401 (PEERDNFLQQ…YLYGFEEYCR (93 aa)) is the ARID domain. A Glycyl lysine isopeptide (Lys-Gly) (interchain with G-Cter in SUMO2) cross-link involves residue Lys481. Disordered regions lie at residues 498-582 (LENK…GTKV), 633-768 (WPLD…EAGD), and 842-953 (FSST…EDAM). A compositionally biased stretch (basic and acidic residues) spans 512–522 (PAAKREHELLF). The segment covering 526–536 (STPKNKEKKIK) has biased composition (basic residues). Positions 541–551 (SERDSDEEEEK) are enriched in acidic residues. Basic and acidic residues predominate over residues 552-564 (SQEREETESRCDS). The segment covering 565–574 (EGEDEEDDTE) has biased composition (acidic residues). The Tudor-knot domain maps to 579–631 (GTKVKVKYGRGKTQKIYEASIKSTEMDDGEILYLVHYYGWNVRYDEWVKADRI). A compositionally biased stretch (basic residues) spans 640–649 (PKKKQKKKVK). Residues 650-665 (NKEDSEKDEKRDEERQ) are compositionally biased toward basic and acidic residues. Over residues 676 to 689 (STFSPNMPYSLSKT) the composition is skewed to polar residues. Ser679 carries the post-translational modification Phosphoserine. A compositionally biased stretch (low complexity) spans 690–702 (SNSEGKSDSCSSD). Over residues 708–753 (QLEKSSGGEDLSPDVKEELEKNENAHDDKLDEENPKIVHISKENDR) the composition is skewed to basic and acidic residues. A Phosphoserine modification is found at Ser719. Residues Lys723 and Lys743 each participate in a glycyl lysine isopeptide (Lys-Gly) (interchain with G-Cter in SUMO2) cross-link. Ser867 carries the post-translational modification Phosphoserine. Composition is skewed to basic and acidic residues over residues 899–909 (KGAHVEQHFET) and 929–947 (TSEK…TPLK). The segment at 955–968 (LIGPETLVCHEVDL) is retinoblastoma protein binding. Residues 1067–1080 (HERESREKGQKRPS) show a composition bias toward basic and acidic residues. Disordered regions lie at residues 1067–1173 (HERE…RTYK) and 1216–1261 (RRRK…VECR). Phosphoserine occurs at positions 1113 and 1149. Over residues 1230–1252 (HAGASMSSASSDTGMSPSSSSPP) the composition is skewed to low complexity.

As to quaternary structure, identified in mSin3A corepressor complexes together with SIN3A, SIN3B, RBBP4, RBBP7, SAP30, BRMS1, HDAC1 and HDAC2. Interacts with BRMS1. Interacts with RB1. Interacts with ARID4B. Interacts with AR. Expressed in Sertoli cells of the testis.

The protein localises to the nucleus. DNA-binding protein which modulates activity of several transcription factors including RB1 (retinoblastoma-associated protein) and AR (androgen receptor). May function as part of an mSin3A repressor complex. Has no intrinsic transcriptional activity. Plays a role in the regulation of epigenetic modifications at the PWS/AS imprinting center near the SNRPN promoter, where it might function as part of a complex with RB1 and ARID4B. Involved in spermatogenesis, together with ARID4B, where it acts as a transcriptional coactivator for AR and enhances expression of genes required for sperm maturation. Regulates expression of the tight junction protein CLDN3 in the testis, which is important for integrity of the blood-testis barrier. Plays a role in myeloid homeostasis where it regulates the histone methylation state of bone marrow cells and expression of various genes involved in hematopoiesis. May function as a leukemia suppressor. The sequence is that of AT-rich interactive domain-containing protein 4A from Mus musculus (Mouse).